A 299-amino-acid polypeptide reads, in one-letter code: Protoheme IX farnesyltransferase (299 aa).

Transmembrane regions (helical) follow at residues 25–45 (VVLLMLITSLVGMFLATRAGV), 47–67 (WTVLLFGNLGIGLCAGAAAAV), 95–115 (AAAIAFALLLATAGMGLLLLF), 119–139 (LAAWLTLASLLGYAVIYTGFL), 147–167 (IVIGGLAGAAPPLLGWVAVTG), 173–193 (PLLLVLIIFAWTPPHFWALAI), 218–238 (VHILLYTLVMFAVTLLPYAIH), 243–263 (LYLVCALLLGARFLHWAWVLY), and 279–299 (IWYLFLLFIALLADHYLLLNI).

This sequence belongs to the UbiA prenyltransferase family. Protoheme IX farnesyltransferase subfamily.

The protein localises to the cell inner membrane. The catalysed reaction is heme b + (2E,6E)-farnesyl diphosphate + H2O = Fe(II)-heme o + diphosphate. Its pathway is porphyrin-containing compound metabolism; heme O biosynthesis; heme O from protoheme: step 1/1. Its function is as follows. Converts heme B (protoheme IX) to heme O by substitution of the vinyl group on carbon 2 of heme B porphyrin ring with a hydroxyethyl farnesyl side group. The chain is Protoheme IX farnesyltransferase from Ectopseudomonas mendocina (strain ymp) (Pseudomonas mendocina).